The following is a 295-amino-acid chain: Protease HtpX (295 aa).

Transmembrane regions (helical) follow at residues 4-24 (ILLF…TLSL) and 41-61 (SSLL…SLFI). H147 lines the Zn(2+) pocket. The active site involves E148. H151 serves as a coordination point for Zn(2+). Helical transmembrane passes span 158 to 178 (VTLA…ARII) and 199 to 219 (VATI…VMWF). E224 provides a ligand contact to Zn(2+).

It belongs to the peptidase M48B family. Requires Zn(2+) as cofactor.

The protein localises to the cell inner membrane. This chain is Protease HtpX, found in Pseudomonas putida (strain GB-1).